We begin with the raw amino-acid sequence, 665 residues long: Protein phosphatase 1 regulatory subunit 21 (665 aa).

Coiled-coil stretches lie at residues 1–84 (MTDL…SESK), 125–206 (LEAQ…RKYQ), 426–477 (ESRE…EAQV), and 586–627 (KRLA…EDQL).

As to quaternary structure, component of the FERRY complex.

Its subcellular location is the early endosome. Functionally, component of the FERRY complex (Five-subunit Endosomal Rab5 and RNA/ribosome intermediary). The FERRY complex directly interacts with mRNAs and RAB5A, and functions as a RAB5A effector involved in the localization and the distribution of specific mRNAs most likely by mediating their endosomal transport. The complex recruits mRNAs and ribosomes to early endosomes through direct mRNA-interaction. Putative regulator of protein phosphatase 1 (PP1) activity. May play a role in the endosomal sorting process or in endosome maturation pathway. The protein is Protein phosphatase 1 regulatory subunit 21 (ppp1r21) of Danio rerio (Zebrafish).